Consider the following 281-residue polypeptide: Glutamate racemase (281 aa).

Substrate is bound by residues 13 to 14 and 45 to 46; these read DS and YG. The active-site Proton donor/acceptor is the C76. 77 to 78 is a substrate binding site; it reads NT. The active-site Proton donor/acceptor is C185. 186 to 187 contributes to the substrate binding site; that stretch reads TH.

This sequence belongs to the aspartate/glutamate racemases family.

The enzyme catalyses L-glutamate = D-glutamate. It participates in cell wall biogenesis; peptidoglycan biosynthesis. Functionally, provides the (R)-glutamate required for cell wall biosynthesis. The chain is Glutamate racemase from Rippkaea orientalis (strain PCC 8801 / RF-1) (Cyanothece sp. (strain PCC 8801)).